A 158-amino-acid chain; its full sequence is Transcription elongation factor GreA (158 aa).

Belongs to the GreA/GreB family.

Functionally, necessary for efficient RNA polymerase transcription elongation past template-encoded arresting sites. The arresting sites in DNA have the property of trapping a certain fraction of elongating RNA polymerases that pass through, resulting in locked ternary complexes. Cleavage of the nascent transcript by cleavage factors such as GreA or GreB allows the resumption of elongation from the new 3'terminus. GreA releases sequences of 2 to 3 nucleotides. The protein is Transcription elongation factor GreA of Rhizobium etli (strain CIAT 652).